The primary structure comprises 480 residues: Na(+)/H(+) antiporter NhaA (480 aa).

11 helical membrane passes run 34-54 (VGGV…NIPA), 76-96 (LSVA…VAGI), 113-133 (AVLP…VYTL), 144-164 (GWAV…AVIG), 174-194 (FLLT…AIFF), 197-217 (RINF…WLLL), 223-243 (GWYV…NSGV), 282-302 (GLAV…GGAL), 312-332 (LGVV…STWL), 350-370 (IFAV…IGEL), and 381-401 (EVKA…TVLL). Residues 454 to 480 (AAEKAAAARHGGAEVPGGAGEEDGRPA) form a disordered region.

This sequence belongs to the NhaA Na(+)/H(+) (TC 2.A.33) antiporter family.

The protein localises to the cell membrane. The enzyme catalyses Na(+)(in) + 2 H(+)(out) = Na(+)(out) + 2 H(+)(in). Na(+)/H(+) antiporter that extrudes sodium in exchange for external protons. The sequence is that of Na(+)/H(+) antiporter NhaA from Streptomyces antibioticus.